The primary structure comprises 220 residues: Phosphoserine phosphatase (220 aa).

Residue D11 is the Nucleophile of the active site. 2 residues coordinate Mg(2+): D11 and D13. D13 functions as the Proton donor in the catalytic mechanism. Substrate is bound by residues E20, R56, S99–G100, and K144. D167 serves as a coordination point for Mg(2+). N170 is a binding site for substrate.

This sequence belongs to the HAD-like hydrolase superfamily. SerB family. Requires Mg(2+) as cofactor.

It catalyses the reaction O-phospho-L-serine + H2O = L-serine + phosphate. It carries out the reaction O-phospho-D-serine + H2O = D-serine + phosphate. The protein operates within amino-acid biosynthesis; L-serine biosynthesis; L-serine from 3-phospho-D-glycerate: step 3/3. In Idiomarina loihiensis (strain ATCC BAA-735 / DSM 15497 / L2-TR), this protein is Phosphoserine phosphatase.